The primary structure comprises 156 residues: Arginine repressor (156 aa).

The protein belongs to the ArgR family.

The protein resides in the cytoplasm. It participates in amino-acid biosynthesis; L-arginine biosynthesis [regulation]. Functionally, regulates arginine biosynthesis genes. The protein is Arginine repressor of Vibrio campbellii (strain ATCC BAA-1116).